A 225-amino-acid polypeptide reads, in one-letter code: NAD(P)H-quinone oxidoreductase subunit K, chloroplastic (225 aa).

Residues Cys43, Cys44, Cys108, and Cys139 each coordinate [4Fe-4S] cluster.

The protein belongs to the complex I 20 kDa subunit family. As to quaternary structure, NDH is composed of at least 16 different subunits, 5 of which are encoded in the nucleus. [4Fe-4S] cluster serves as cofactor.

The protein resides in the plastid. It is found in the chloroplast thylakoid membrane. The enzyme catalyses a plastoquinone + NADH + (n+1) H(+)(in) = a plastoquinol + NAD(+) + n H(+)(out). The catalysed reaction is a plastoquinone + NADPH + (n+1) H(+)(in) = a plastoquinol + NADP(+) + n H(+)(out). Its function is as follows. NDH shuttles electrons from NAD(P)H:plastoquinone, via FMN and iron-sulfur (Fe-S) centers, to quinones in the photosynthetic chain and possibly in a chloroplast respiratory chain. The immediate electron acceptor for the enzyme in this species is believed to be plastoquinone. Couples the redox reaction to proton translocation, and thus conserves the redox energy in a proton gradient. The chain is NAD(P)H-quinone oxidoreductase subunit K, chloroplastic from Gossypium barbadense (Sea Island cotton).